The following is a 234-amino-acid chain: Lipoprotein-releasing system ATP-binding protein LolD (234 aa).

The 221-residue stretch at 13–233 (IYLHEIKRQY…SLSDGQVVEL (221 aa)) folds into the ABC transporter domain. ATP is bound at residue 49-56 (APSGSGKS).

It belongs to the ABC transporter superfamily. Lipoprotein translocase (TC 3.A.1.125) family. In terms of assembly, the complex is composed of two ATP-binding proteins (LolD) and two transmembrane proteins (LolC and LolE).

Its subcellular location is the cell inner membrane. Part of the ABC transporter complex LolCDE involved in the translocation of mature outer membrane-directed lipoproteins, from the inner membrane to the periplasmic chaperone, LolA. Responsible for the formation of the LolA-lipoprotein complex in an ATP-dependent manner. The protein is Lipoprotein-releasing system ATP-binding protein LolD of Bradyrhizobium diazoefficiens (strain JCM 10833 / BCRC 13528 / IAM 13628 / NBRC 14792 / USDA 110).